The sequence spans 453 residues: Phenylalanine-4-hydroxylase (453 aa).

Position 2 is an N-acetylalanine (alanine 2). Serine 16 is subject to Phosphoserine; by PKA. Residues 36–114 (SLIFSLKEEV…TVHELSRDKE (79 aa)) form the ACT domain. The Fe cation site is built by histidine 285, histidine 290, and glutamate 330.

The protein belongs to the biopterin-dependent aromatic amino acid hydroxylase family. In terms of assembly, homodimer and homotetramer. Fe(2+) is required as a cofactor. Post-translationally, phosphorylation at Ser-16 increases basal activity and facilitates activation by the substrate phenylalanine.

It catalyses the reaction (6R)-L-erythro-5,6,7,8-tetrahydrobiopterin + L-phenylalanine + O2 = (4aS,6R)-4a-hydroxy-L-erythro-5,6,7,8-tetrahydrobiopterin + L-tyrosine. It functions in the pathway amino-acid degradation; L-phenylalanine degradation; acetoacetate and fumarate from L-phenylalanine: step 1/6. Its activity is regulated as follows. N-terminal region of PAH is thought to contain allosteric binding sites for phenylalanine and to constitute an 'inhibitory' domain that regulates the activity of a catalytic domain in the C-terminal portion of the molecule. In terms of biological role, catalyzes the hydroxylation of L-phenylalanine to L-tyrosine. In Rattus norvegicus (Rat), this protein is Phenylalanine-4-hydroxylase (Pah).